We begin with the raw amino-acid sequence, 434 residues long: Gamma-glutamyl phosphate reductase (434 aa).

It belongs to the gamma-glutamyl phosphate reductase family.

It is found in the cytoplasm. It carries out the reaction L-glutamate 5-semialdehyde + phosphate + NADP(+) = L-glutamyl 5-phosphate + NADPH + H(+). It participates in amino-acid biosynthesis; L-proline biosynthesis; L-glutamate 5-semialdehyde from L-glutamate: step 2/2. In terms of biological role, catalyzes the NADPH-dependent reduction of L-glutamate 5-phosphate into L-glutamate 5-semialdehyde and phosphate. The product spontaneously undergoes cyclization to form 1-pyrroline-5-carboxylate. This is Gamma-glutamyl phosphate reductase from Trichormus variabilis (strain ATCC 29413 / PCC 7937) (Anabaena variabilis).